The sequence spans 324 residues: Kelch domain-containing protein AF_2170 (324 aa).

Kelch repeat units follow at residues Tyr-229–Glu-276 and Tyr-277–Lys-323.

The polypeptide is Kelch domain-containing protein AF_2170 (Archaeoglobus fulgidus (strain ATCC 49558 / DSM 4304 / JCM 9628 / NBRC 100126 / VC-16)).